We begin with the raw amino-acid sequence, 213 residues long: Leucyl/phenylalanyl-tRNA--protein transferase (213 aa).

It belongs to the L/F-transferase family.

Its subcellular location is the cytoplasm. It carries out the reaction N-terminal L-lysyl-[protein] + L-leucyl-tRNA(Leu) = N-terminal L-leucyl-L-lysyl-[protein] + tRNA(Leu) + H(+). It catalyses the reaction N-terminal L-arginyl-[protein] + L-leucyl-tRNA(Leu) = N-terminal L-leucyl-L-arginyl-[protein] + tRNA(Leu) + H(+). The enzyme catalyses L-phenylalanyl-tRNA(Phe) + an N-terminal L-alpha-aminoacyl-[protein] = an N-terminal L-phenylalanyl-L-alpha-aminoacyl-[protein] + tRNA(Phe). Functions in the N-end rule pathway of protein degradation where it conjugates Leu, Phe and, less efficiently, Met from aminoacyl-tRNAs to the N-termini of proteins containing an N-terminal arginine or lysine. The sequence is that of Leucyl/phenylalanyl-tRNA--protein transferase from Rhodospirillum rubrum (strain ATCC 11170 / ATH 1.1.1 / DSM 467 / LMG 4362 / NCIMB 8255 / S1).